The chain runs to 168 residues: Lipoprotein signal peptidase (168 aa).

The next 3 membrane-spanning stretches (helical) occupy residues 6-26 (VLAA…DQIT), 70-90 (WFLA…IAKL), and 98-118 (ALAL…RMLL). Catalysis depends on residues Asp123 and Asp141. Residues 139 to 159 (IADSAICIGAALLVWDSLFGT) form a helical membrane-spanning segment.

This sequence belongs to the peptidase A8 family.

The protein localises to the cell inner membrane. The enzyme catalyses Release of signal peptides from bacterial membrane prolipoproteins. Hydrolyzes -Xaa-Yaa-Zaa-|-(S,diacylglyceryl)Cys-, in which Xaa is hydrophobic (preferably Leu), and Yaa (Ala or Ser) and Zaa (Gly or Ala) have small, neutral side chains.. The protein operates within protein modification; lipoprotein biosynthesis (signal peptide cleavage). In terms of biological role, this protein specifically catalyzes the removal of signal peptides from prolipoproteins. The protein is Lipoprotein signal peptidase of Teredinibacter turnerae (strain ATCC 39867 / T7901).